The chain runs to 1227 residues: Protein transport protein Sec31A (1227 aa).

WD repeat units lie at residues 4–47 (KEID…EIFE), 64–111 (SSAH…AGDT), 120–160 (KHTG…TPMT), 166–206 (QPLE…PIIK), 209–254 (DHNN…SPLR), 258–298 (SHTR…VLYE), and 301–342 (TNMQ…DGLR). Residues 397-430 (SFSFGGKLVTFENAKPQQQPGIDQQPQHHYVYVS) form a WD 8; interaction with SEC13 repeat. Disordered stretches follow at residues 804–875 (EAIK…YSQA), 905–1008 (QPVA…GWND), and 1040–1075 (ADPQ…LGPY). The segment covering 905-924 (QPVAAPASASYPSPASNTNP) has biased composition (low complexity). Residues 925-945 (PYLPAAQPVPSPLYPGQPQPS) show a composition bias toward pro residues. The segment covering 995–1006 (PASQRTGPQNGW) has biased composition (polar residues). Over residues 1040 to 1049 (ADPQAQMQQP) the composition is skewed to low complexity. Over residues 1057 to 1069 (PSFQPQQLSTGQQ) the composition is skewed to polar residues.

The protein belongs to the WD repeat SEC31 family. As to quaternary structure, COPII is composed of at least 5 proteins: the SEC23/24 complex, the SEC13/31 complex and SAR1. SEC13 and SEC31 make a 2:2 tetramer that forms the edge element of the COPII outer coat. The tetramer self-assembles in multiple copies to form the complete polyhedral cage. Interacts (via WD 8) with SEC13.

It is found in the cytoplasm. The protein resides in the cytoplasmic vesicle. It localises to the COPII-coated vesicle membrane. The protein localises to the endoplasmic reticulum membrane. In terms of biological role, component of the coat protein complex II (COPII) which promotes the formation of transport vesicles from the endoplasmic reticulum (ER). The coat has two main functions, the physical deformation of the endoplasmic reticulum membrane into vesicles and the selection of cargo molecules. This chain is Protein transport protein Sec31A (SEC31A), found in Gallus gallus (Chicken).